The chain runs to 215 residues: Elongation factor Ts (215 aa).

Residues 80-83 are involved in Mg(2+) ion dislocation from EF-Tu; sequence TDFA.

Belongs to the EF-Ts family.

It localises to the cytoplasm. Associates with the EF-Tu.GDP complex and induces the exchange of GDP to GTP. It remains bound to the aminoacyl-tRNA.EF-Tu.GTP complex up to the GTP hydrolysis stage on the ribosome. The sequence is that of Elongation factor Ts from Acetivibrio thermocellus (strain ATCC 27405 / DSM 1237 / JCM 9322 / NBRC 103400 / NCIMB 10682 / NRRL B-4536 / VPI 7372) (Clostridium thermocellum).